A 705-amino-acid chain; its full sequence is Elongation factor G (705 aa).

A tr-type G domain is found at 8-289; that stretch reads VNYRNIGISA…TVINYLPSPK (282 aa). Residues 17–24, 88–92, and 142–145 contribute to the GTP site; these read AHIDAGKT, DTPGH, and NKMD.

Belongs to the TRAFAC class translation factor GTPase superfamily. Classic translation factor GTPase family. EF-G/EF-2 subfamily.

The protein resides in the cytoplasm. Catalyzes the GTP-dependent ribosomal translocation step during translation elongation. During this step, the ribosome changes from the pre-translocational (PRE) to the post-translocational (POST) state as the newly formed A-site-bound peptidyl-tRNA and P-site-bound deacylated tRNA move to the P and E sites, respectively. Catalyzes the coordinated movement of the two tRNA molecules, the mRNA and conformational changes in the ribosome. This chain is Elongation factor G, found in Wigglesworthia glossinidia brevipalpis.